A 435-amino-acid polypeptide reads, in one-letter code: Serine hydroxymethyltransferase (435 aa).

Residues L133 and 137–139 (GHL) each bind (6S)-5,6,7,8-tetrahydrofolate. N6-(pyridoxal phosphate)lysine is present on K242.

It belongs to the SHMT family. Homodimer. Requires pyridoxal 5'-phosphate as cofactor.

It is found in the cytoplasm. The enzyme catalyses (6R)-5,10-methylene-5,6,7,8-tetrahydrofolate + glycine + H2O = (6S)-5,6,7,8-tetrahydrofolate + L-serine. It participates in one-carbon metabolism; tetrahydrofolate interconversion. The protein operates within amino-acid biosynthesis; glycine biosynthesis; glycine from L-serine: step 1/1. Catalyzes the reversible interconversion of serine and glycine with tetrahydrofolate (THF) serving as the one-carbon carrier. This reaction serves as the major source of one-carbon groups required for the biosynthesis of purines, thymidylate, methionine, and other important biomolecules. Also exhibits THF-independent aldolase activity toward beta-hydroxyamino acids, producing glycine and aldehydes, via a retro-aldol mechanism. This Sphingopyxis alaskensis (strain DSM 13593 / LMG 18877 / RB2256) (Sphingomonas alaskensis) protein is Serine hydroxymethyltransferase.